We begin with the raw amino-acid sequence, 339 residues long: Dicamba O-demethylase, oxygenase component (339 aa).

Residues 8–110 (WYVAALPEEL…VVERDALIWI (103 aa)) enclose the Rieske domain. [2Fe-2S] cluster contacts are provided by Cys48, His50, Cys67, and His70. Residues His159 and His164 each contribute to the Fe cation site. 3,6-dichloro-2-methoxybenzoate contacts are provided by Asn229, His250, and Trp284. Asp293 is a binding site for Fe cation.

In terms of assembly, homotrimer. The dicamba O-demethylase multicomponent enzyme system is composed of an oxygenase component (DdmC) and an electron transfer component formed by a ferredoxin reductase (DdmA) and a ferredoxin (DdmB). In vitro, dicamba O-demethylase assays in which DdmA2 is substituted for DdmA1 demonstrate that the two enzymes possess nearly identical activities. Requires [2Fe-2S] cluster as cofactor.

It catalyses the reaction 3,6-dichloro-2-methoxybenzoate + 2 reduced [2Fe-2S]-[ferredoxin] + O2 + 2 H(+) = 3,6-dichlorosalicylate + formaldehyde + 2 oxidized [2Fe-2S]-[ferredoxin] + H2O. Activity enhanced by Fe(2+) and Mg(2+) ions. Its function is as follows. Component of the dicamba O-demethylase multicomponent enzyme system involved in the degradation of the herbicide dicamba. In vitro, catalyzes the O-demethylation of 2-methoxy-3,6-dichlorobenzoic acid (dicamba) to yield 3,6-dichlorosalicylic acid (DCSA) via an exocyclic monooxygenation. This Stenotrophomonas maltophilia (Pseudomonas maltophilia) protein is Dicamba O-demethylase, oxygenase component.